Here is a 198-residue protein sequence, read N- to C-terminus: Recombination protein RecR (198 aa).

The C4-type zinc finger occupies 57–72; sequence CSVCGHITENDPCYIC. Positions 80 to 175 constitute a Toprim domain; sequence SVICVVEDDK…KVTRLAQGLS (96 aa).

This sequence belongs to the RecR family.

Functionally, may play a role in DNA repair. It seems to be involved in an RecBC-independent recombinational process of DNA repair. It may act with RecF and RecO. In Staphylococcus epidermidis (strain ATCC 35984 / DSM 28319 / BCRC 17069 / CCUG 31568 / BM 3577 / RP62A), this protein is Recombination protein RecR.